Here is a 224-residue protein sequence, read N- to C-terminus: Phosphoglycolate phosphatase (224 aa).

D11 (nucleophile) is an active-site residue. The Mg(2+) site is built by D11, D13, and D177.

Belongs to the HAD-like hydrolase superfamily. CbbY/CbbZ/Gph/YieH family. Mg(2+) is required as a cofactor.

The enzyme catalyses 2-phosphoglycolate + H2O = glycolate + phosphate. Its pathway is organic acid metabolism; glycolate biosynthesis; glycolate from 2-phosphoglycolate: step 1/1. In terms of biological role, specifically catalyzes the dephosphorylation of 2-phosphoglycolate. Is involved in the dissimilation of the intracellular 2-phosphoglycolate formed during the DNA repair of 3'-phosphoglycolate ends, a major class of DNA lesions induced by oxidative stress. The sequence is that of Phosphoglycolate phosphatase from Mannheimia succiniciproducens (strain KCTC 0769BP / MBEL55E).